The sequence spans 277 residues: Shikimate dehydrogenase (NADP(+)) (277 aa).

Shikimate-binding positions include serine 15–serine 17 and threonine 62. The active-site Proton acceptor is lysine 66. The shikimate site is built by asparagine 87 and aspartate 102. Residues glycine 127 to alanine 131, asparagine 151 to lysine 156, and isoleucine 219 each bind NADP(+). Tyrosine 221 contacts shikimate. An NADP(+)-binding site is contributed by glycine 242.

It belongs to the shikimate dehydrogenase family. Homodimer.

It catalyses the reaction shikimate + NADP(+) = 3-dehydroshikimate + NADPH + H(+). The protein operates within metabolic intermediate biosynthesis; chorismate biosynthesis; chorismate from D-erythrose 4-phosphate and phosphoenolpyruvate: step 4/7. Functionally, involved in the biosynthesis of the chorismate, which leads to the biosynthesis of aromatic amino acids. Catalyzes the reversible NADPH linked reduction of 3-dehydroshikimate (DHSA) to yield shikimate (SA). The chain is Shikimate dehydrogenase (NADP(+)) from Geobacillus sp. (strain WCH70).